The sequence spans 588 residues: Phomenoic acid biosynthesis cluster cytochrome P450 monooxygenase (588 aa).

An N-terminal signal peptide occupies residues 1 to 21 (MSFARIFITILLLFILRRAFK). Asn-293 carries N-linked (GlcNAc...) asparagine glycosylation. The span at 467–486 (HQSDPDRFKPSPDAPDEKLF) shows a compositional bias: basic and acidic residues. The segment at 467 to 490 (HQSDPDRFKPSPDAPDEKLFRPSR) is disordered. Residue Cys-519 coordinates heme.

The protein belongs to the cytochrome P450 family. Heme is required as a cofactor.

It functions in the pathway secondary metabolite biosynthesis. Functionally, cytochrome P450 monooxygenase; part of the gene cluster that mediates the biosynthesis of phomenoic acid, a long chain aliphatic carboxylic acid that does not appear to be essential for pathogenicity but may play a role in allowing to outcompete other fungi in the environmental niche via its antifungal properties. The polyketide synthase produces the long methylated aliphatic carboxylic acid chain of phomenoic acid. The cluster-specific cytochrome P450 monooxygenase may then hydroxylate the methyl group of carbon 31. The putative dehydrogenase YogA, which has no obvious role in phomenoic acid biosynthesis, may further modify phomenoic acid to produce a compound not identified yet. The chain is Phomenoic acid biosynthesis cluster cytochrome P450 monooxygenase from Leptosphaeria maculans (strain JN3 / isolate v23.1.3 / race Av1-4-5-6-7-8) (Blackleg fungus).